A 293-amino-acid chain; its full sequence is Glycine N-methyltransferase (293 aa).

Val-2 is subject to N-acetylvaline. Positions 4 and 6 each coordinate (6S)-5-methyl-5,6,7,8-tetrahydrofolate. Phosphoserine is present on Ser-10. Tyr-22, Trp-31, Tyr-34, and Arg-41 together coordinate S-adenosyl-L-methionine. Tyr-34 is subject to Phosphotyrosine. Lys-46 carries the N6-succinyllysine modification. S-adenosyl-L-methionine is bound by residues Ala-65, 86–88 (DAS), 117–118 (NW), Leu-137, 137–140 (LGNS), and Arg-176. N6-succinyllysine is present on residues Lys-191, Lys-196, and Lys-201. His-215 contacts (6S)-5-methyl-5,6,7,8-tetrahydrofolate. Tyr-221 contributes to the S-adenosyl-L-methionine binding site. Residue Arg-240 participates in (6S)-5-methyl-5,6,7,8-tetrahydrofolate binding.

The protein belongs to the class I-like SAM-binding methyltransferase superfamily. Glycine N-methyltransferase family. In terms of assembly, homotetramer.

The protein resides in the cytoplasm. The catalysed reaction is glycine + S-adenosyl-L-methionine = sarcosine + S-adenosyl-L-homocysteine + H(+). With respect to regulation, inhibited by 5-methyltetrahydrofolate monoglutamate and by 5-methyltetrahydrofolate pentaglutamate, inhibition is much more effective by the pentaglutamate form than by the monoglutamate form. Two molecules of 5-methyltetrahydrofolate are bound per tetramer. The binding sites are localized between subunits. Inhibitor binding may preclude movements of the polypeptide chain that are necessary for enzyme activity. In terms of biological role, catalyzes the methylation of glycine by using S-adenosylmethionine (AdoMet) to form N-methylglycine (sarcosine) with the concomitant production of S-adenosylhomocysteine (AdoHcy), a reaction regulated by the binding of 5-methyltetrahydrofolate. Plays an important role in the regulation of methyl group metabolism by regulating the ratio between S-adenosyl-L-methionine and S-adenosyl-L-homocysteine. The chain is Glycine N-methyltransferase (Gnmt) from Mus musculus (Mouse).